The chain runs to 157 residues: Electron transfer flavoprotein regulatory factor 1 homolog (157 aa).

Belongs to the complex I LYR family.

It is found in the mitochondrion. The sequence is that of Electron transfer flavoprotein regulatory factor 1 homolog from Dictyostelium discoideum (Social amoeba).